The chain runs to 485 residues: Peptidyl-prolyl cis-trans isomerase-like 4 (485 aa).

A PPIase cyclophilin-type domain is found at 1–172; it reads MSVLLETSAG…IDIRIKHTVI (172 aa). Residues 251-329 form the RRM domain; that stretch reads NVLFVCKLNP…RRIHVDFSQS (79 aa). Residues 377 to 485 form a disordered region; the sequence is NYRMVYGEEE…RDENDRRSRR (109 aa). A compositionally biased stretch (basic and acidic residues) spans 426 to 485; the sequence is RPRDRSRDRYHKPRDDRRGDRRDRDRRDQDRNRYRDRDHRDRGREKDRYGRDENDRRSRR.

It belongs to the cyclophilin-type PPIase family. PPIL4 subfamily.

The protein localises to the nucleus. The catalysed reaction is [protein]-peptidylproline (omega=180) = [protein]-peptidylproline (omega=0). Functionally, PPIases accelerate the folding of proteins. It catalyzes the cis-trans isomerization of proline imidic peptide bonds in oligopeptides. The chain is Peptidyl-prolyl cis-trans isomerase-like 4 (CYP6) from Gibberella zeae (strain ATCC MYA-4620 / CBS 123657 / FGSC 9075 / NRRL 31084 / PH-1) (Wheat head blight fungus).